A 316-amino-acid chain; its full sequence is Acetaldehyde dehydrogenase (316 aa).

Residue 11–14 (SGNI) participates in NAD(+) binding. Cysteine 131 (acyl-thioester intermediate) is an active-site residue. NAD(+) contacts are provided by residues 162 to 170 (SAGPGTRAN) and asparagine 289.

It belongs to the acetaldehyde dehydrogenase family. Interacts with MhpE.

The enzyme catalyses acetaldehyde + NAD(+) + CoA = acetyl-CoA + NADH + H(+). Its pathway is aromatic compound metabolism; 3-phenylpropanoate degradation. Catalyzes the conversion of acetaldehyde to acetyl-CoA, using NAD(+) and coenzyme A. Is the final enzyme in the meta-cleavage pathway for the degradation of aromatic compounds. The polypeptide is Acetaldehyde dehydrogenase (Escherichia coli O157:H7).